A 469-amino-acid polypeptide reads, in one-letter code: UDP-N-acetylmuramate--L-alanine ligase (469 aa).

113-119 (GTHGKTT) is an ATP binding site.

This sequence belongs to the MurCDEF family.

It localises to the cytoplasm. The enzyme catalyses UDP-N-acetyl-alpha-D-muramate + L-alanine + ATP = UDP-N-acetyl-alpha-D-muramoyl-L-alanine + ADP + phosphate + H(+). It participates in cell wall biogenesis; peptidoglycan biosynthesis. In terms of biological role, cell wall formation. The chain is UDP-N-acetylmuramate--L-alanine ligase from Neisseria gonorrhoeae (strain ATCC 700825 / FA 1090).